The following is a 183-amino-acid chain: Probable transcription termination protein NusA (183 aa).

A KH domain is found at 32 to 98 (DERVAFIVKE…DDVWVKRVGK (67 aa)). The disordered stretch occupies residues 149 to 183 (RKRAKRPVVKDQQQEQTETKQETDVQQDVKETVKE). Over residues 156–183 (VVKDQQQEQTETKQETDVQQDVKETVKE) the composition is skewed to basic and acidic residues.

It belongs to the NusA family.

It localises to the cytoplasm. Participates in transcription termination. This is Probable transcription termination protein NusA from Methanocaldococcus jannaschii (strain ATCC 43067 / DSM 2661 / JAL-1 / JCM 10045 / NBRC 100440) (Methanococcus jannaschii).